The following is a 616-amino-acid chain: Chaperone protein HscA (616 aa).

Belongs to the heat shock protein 70 family.

In terms of biological role, chaperone involved in the maturation of iron-sulfur cluster-containing proteins. Has a low intrinsic ATPase activity which is markedly stimulated by HscB. Involved in the maturation of IscU. The protein is Chaperone protein HscA of Escherichia coli O17:K52:H18 (strain UMN026 / ExPEC).